We begin with the raw amino-acid sequence, 708 residues long: E3 ubiquitin-protein ligase RNF169 (708 aa).

2 stretches are compositionally biased toward low complexity: residues M1–S20 and A33–P53. Disordered regions lie at residues M1–C71, A96–F169, and E195–T262. S12 is subject to Phosphoserine. The segment at C68–R107 adopts an RING-type zinc-finger fold. Residues C132–G147 show a composition bias toward basic and acidic residues. Residues G148 to P167 show a composition bias toward low complexity. The segment covering E195–P243 has biased composition (basic and acidic residues). Positions E205–P213 match the UMI motif motif. Phosphoserine is present on residues S247 and S249. K286 participates in a covalent cross-link: Glycyl lysine isopeptide (Lys-Gly) (interchain with G-Cter in SUMO2). S339 is subject to Phosphoserine. K362 is covalently cross-linked (Glycyl lysine isopeptide (Lys-Gly) (interchain with G-Cter in SUMO2)). Residues S368, S403, and S409 each carry the phosphoserine modification. T410 is subject to Phosphothreonine. S485 bears the Phosphoserine mark. The segment at S491 to P555 is disordered. K511 is covalently cross-linked (Glycyl lysine isopeptide (Lys-Gly) (interchain with G-Cter in SUMO2)). T554 bears the Phosphothreonine mark. The residue at position 644 (S644) is a Phosphoserine. An MIU motif motif is present at residues Q665 to N682. Residues R689–S701 carry the LR motif motif. The residue at position 693 (S693) is a Phosphoserine.

The protein belongs to the RNF169 family. In terms of assembly, interacts with DYRK1B. In terms of processing, phosphorylated by DYRK1A; phosphorylation increases RNF169 ability to block accumulation of TP53BP1 at the DSB sites.

Its subcellular location is the chromosome. The protein localises to the nucleus. The protein resides in the nucleoplasm. The enzyme catalyses S-ubiquitinyl-[E2 ubiquitin-conjugating enzyme]-L-cysteine + [acceptor protein]-L-lysine = [E2 ubiquitin-conjugating enzyme]-L-cysteine + N(6)-ubiquitinyl-[acceptor protein]-L-lysine.. It functions in the pathway protein modification; protein ubiquitination. Its function is as follows. Probable E3 ubiquitin-protein ligase that acts as a regulator of double-strand breaks (DSBs) repair following DNA damage. Functions in a non-canonical fashion to harness RNF168-mediated protein recruitment to DSB-containing chromatin, thereby contributing to regulation of DSB repair pathway utilization. Once recruited to DSB repair sites by recognizing and binding ubiquitin catalyzed by RNF168, competes with TP53BP1 and BRCA1 for association with RNF168-modified chromatin, thereby favouring homologous recombination repair (HRR) and single-strand annealing (SSA) instead of non-homologous end joining (NHEJ) mediated by TP53BP1. E3 ubiquitin-protein ligase activity is not required for regulation of DSBs repair. The sequence is that of E3 ubiquitin-protein ligase RNF169 (RNF169) from Homo sapiens (Human).